Reading from the N-terminus, the 458-residue chain is Exodeoxyribonuclease 7 large subunit (458 aa).

The protein belongs to the XseA family. In terms of assembly, heterooligomer composed of large and small subunits.

It is found in the cytoplasm. It catalyses the reaction Exonucleolytic cleavage in either 5'- to 3'- or 3'- to 5'-direction to yield nucleoside 5'-phosphates.. Its function is as follows. Bidirectionally degrades single-stranded DNA into large acid-insoluble oligonucleotides, which are then degraded further into small acid-soluble oligonucleotides. The polypeptide is Exodeoxyribonuclease 7 large subunit (Shouchella clausii (strain KSM-K16) (Alkalihalobacillus clausii)).